Reading from the N-terminus, the 355-residue chain is Ubiquinone biosynthesis protein COQ4 homolog, mitochondrial (355 aa).

Zn(2+)-binding residues include H134, D135, H138, and E150.

This sequence belongs to the COQ4 family. In terms of assembly, component of a multi-subunit COQ enzyme complex. The cofactor is Zn(2+).

Its subcellular location is the mitochondrion inner membrane. It catalyses the reaction a 4-hydroxy-3-methoxy-5-(all-trans-polyprenyl)benzoate + H(+) = a 2-methoxy-6-(all-trans-polyprenyl)phenol + CO2. The protein operates within cofactor biosynthesis; ubiquinone biosynthesis. Lyase that catalyzes the C1-decarboxylation of 4-hydroxy-3-methoxy-5-(all-trans-polyprenyl)benzoic acid into 2-methoxy-6-(all-trans-polyprenyl)phenol during ubiquinone biosynthesis. The chain is Ubiquinone biosynthesis protein COQ4 homolog, mitochondrial from Plasmodium chabaudi chabaudi.